A 390-amino-acid polypeptide reads, in one-letter code: O-glycoside alpha-1,2-mannosyltransferase omh1 (390 aa).

Glutamate 279 functions as the Nucleophile in the catalytic mechanism.

It belongs to the glycosyltransferase 15 family.

It is found in the endoplasmic reticulum. Its subcellular location is the golgi apparatus. Mannosyltransferase involved in O-glycosylation of cell wall and secreted proteins. Plays a major role in extending alpha-1,2-linked mannose in the O-glycan pathway. The polypeptide is O-glycoside alpha-1,2-mannosyltransferase omh1 (omh1) (Schizosaccharomyces pombe (strain 972 / ATCC 24843) (Fission yeast)).